Reading from the N-terminus, the 124-residue chain is Fluoride-specific ion channel FluC 1 (124 aa).

Transmembrane regions (helical) follow at residues 1–21, 30–50, 64–84, and 93–113; these read MCAV…ALGA, LWPG…LLGY, FLGV…VDAV, and LYVV…MLAG. Na(+) contacts are provided by glycine 71 and threonine 74.

This sequence belongs to the fluoride channel Fluc/FEX (TC 1.A.43) family.

Its subcellular location is the cell membrane. The catalysed reaction is fluoride(in) = fluoride(out). With respect to regulation, na(+) is not transported, but it plays an essential structural role and its presence is essential for fluoride channel function. In terms of biological role, fluoride-specific ion channel. Important for reducing fluoride concentration in the cell, thus reducing its toxicity. This chain is Fluoride-specific ion channel FluC 1, found in Rhodococcus jostii (strain RHA1).